The primary structure comprises 27 residues: Protein YqiM (27 aa).

This chain is Protein YqiM, found in Escherichia coli (strain K12).